Consider the following 1188-residue polypeptide: AT-rich interactive domain-containing protein 5B (1188 aa).

A Glycyl lysine isopeptide (Lys-Gly) (interchain with G-Cter in SUMO2) cross-link involves residue Lys130. The disordered stretch occupies residues 251-278; it reads RPRKKKTCPQRRDSFSGSKDPNNNCDGK. Ser264 is modified (phosphoserine). Residues 265–275 show a composition bias toward polar residues; that stretch reads FSGSKDPNNNC. Residues 319-411 enclose the ARID domain; that stretch reads RADEQAFLVA…LILPYERFIK (93 aa). Lys337 carries the post-translational modification N6,N6-dimethyllysine. Residues 413 to 614 are disordered; the sequence is EEDKPLPPIK…LTSQNEAEEE (202 aa). 4 stretches are compositionally biased toward basic and acidic residues: residues 445–459, 470–484, 493–504, and 526–535; these read IKQE…KENT, SEQR…HKSA, VKGKPEGHKDLG, and SEKEAEEMGD. Lys446 participates in a covalent cross-link: Glycyl lysine isopeptide (Lys-Gly) (interchain with G-Cter in SUMO2). Residues Lys494 and Lys496 each participate in a glycyl lysine isopeptide (Lys-Gly) (interchain with G-Cter in SUMO2) cross-link. Polar residues predominate over residues 594-609; sequence PFSSFSATKPPLTSQN. Glycyl lysine isopeptide (Lys-Gly) (interchain with G-Cter in SUMO2) cross-links involve residues Lys767, Lys774, Lys803, Lys810, Lys893, Lys916, Lys920, and Lys935. The interval 958–978 is disordered; it reads SPMTMSGPKKYPESLARSGKP. Residues Lys988, Lys1000, and Lys1013 each participate in a glycyl lysine isopeptide (Lys-Gly) (interchain with G-Cter in SUMO2) cross-link. The interval 1030–1066 is disordered; sequence AVSPLDPAKEASGKEKASEQESEGNKGAYGGHSGAAS. Ser1032 bears the Phosphoserine mark. Residues 1036 to 1048 are compositionally biased toward basic and acidic residues; it reads PAKEASGKEKASE. Glycyl lysine isopeptide (Lys-Gly) (interchain with G-Cter in SUMO2) cross-links involve residues Lys1055 and Lys1070. The residue at position 1133 (Ser1133) is a Phosphoserine.

This sequence belongs to the ARID5B family. In terms of processing, methylation at Lys-337 prevents DNA-binding. Demethylation by PHF2 promotes recruitment of the PHF2-ARID5B complex to promoters. In terms of tissue distribution, widely expressed. Expressed in lung, heart, small intestine, kidney, muscle and brain. Also expressed in spleen, thymus, endocrine organs and in uterus and testis.

Its subcellular location is the nucleus. In terms of biological role, transcription coactivator that binds to the 5'-AATA[CT]-3' core sequence and plays a key role in adipogenesis and liver development. Acts by forming a complex with phosphorylated PHF2, which mediates demethylation at Lys-337, leading to target the PHF2-ARID5B complex to target promoters, where PHF2 mediates demethylation of dimethylated 'Lys-9' of histone H3 (H3K9me2), followed by transcription activation of target genes. The PHF2-ARID5B complex acts as a coactivator of HNF4A in liver. Required for adipogenesis: regulates triglyceride metabolism in adipocytes by regulating expression of adipogenic genes. Overexpression leads to induction of smooth muscle marker genes, suggesting that it may also act as a regulator of smooth muscle cell differentiation and proliferation. The sequence is that of AT-rich interactive domain-containing protein 5B (Arid5b) from Mus musculus (Mouse).